The primary structure comprises 677 residues: Forkhead box protein P1 (677 aa).

Polar residues predominate over residues 1-18; the sequence is MMQESGTETKSNGSAIQN. A disordered region spans residues 1–43; sequence MMQESGTETKSNGSAIQNGSGGSNHLLECGGLREGRSNGETPA. Residue Ser83 is modified to Phosphoserine. Residues 270 to 283 show a composition bias toward polar residues; that stretch reads IMNPHASTNGQLSV. Positions 270–298 are disordered; sequence IMNPHASTNGQLSVHTPKRESLSHEEHPH. The segment covering 286 to 298 has biased composition (basic and acidic residues); the sequence is PKRESLSHEEHPH. Lys287 participates in a covalent cross-link: Glycyl lysine isopeptide (Lys-Gly) (interchain with G-Cter in SUMO2). Residues 306–331 form a C2H2-type zinc finger; sequence GVCKWPGCEAVCEDFQSFLKHLNSEH. The tract at residues 348–369 is leucine-zipper; it reads VQQLELQLAKDKERLQAMMTHL. Glycyl lysine isopeptide (Lys-Gly) (interchain with G-Cter in SUMO2) cross-links involve residues Lys372 and Lys377. Residues 382–386 are CTBP1-binding; sequence PLNLV. Over residues 390–403 the composition is skewed to polar residues; that stretch reads TLSKSASEASPQSL. Positions 390–422 are disordered; that stretch reads TLSKSASEASPQSLPHTPTTPTAPLTPVTQGPS. A compositionally biased stretch (low complexity) spans 404 to 418; sequence PHTPTTPTAPLTPVT. Lys442 is covalently cross-linked (Glycyl lysine isopeptide (Lys-Gly) (interchain with G-Cter in SUMO2)). A DNA-binding region (fork-head) is located at residues 465–555; the sequence is RPPFTYASLI…PQKISGNPSL (91 aa). The disordered stretch occupies residues 611–677; it reads EHTNSNESDS…EDEPVNEDME (67 aa). Over residues 612 to 623 the composition is skewed to polar residues; the sequence is HTNSNESDSSPG. The residue at position 653 (Thr653) is a Phosphothreonine. Phosphoserine is present on Ser658. The segment covering 667–677 has biased composition (acidic residues); sequence YEDEPVNEDME.

As to quaternary structure, forms homodimers and heterodimers with FOXP2 and FOXP4. Dimerization is required for DNA-binding. Self-associates. Interacts with CTBP1. Interacts with NCOR2 and AR. Interacts with FOXP2. Interacts with TBR1. Interacts with AURKA; this interaction facilitates the phosphorylation of FOXP1, which suppresses the expression of FBXL7. Interacts with ZMYM2. As to expression, isoform 8 is specifically expressed in embryonic stem cells.

It localises to the nucleus. Functionally, transcriptional repressor. Can act with CTBP1 to synergistically repress transcription but CTPBP1 is not essential. Plays an important role in the specification and differentiation of lung epithelium. Acts cooperatively with FOXP4 to regulate lung secretory epithelial cell fate and regeneration by restricting the goblet cell lineage program; the function may involve regulation of AGR2. Essential transcriptional regulator of B-cell development. Involved in regulation of cardiac muscle cell proliferation. Involved in the columnar organization of spinal motor neurons. Promotes the formation of the lateral motor neuron column (LMC) and the preganglionic motor column (PGC) and is required for respective appropriate motor axon projections. The segment-appropriate generation of spinal cord motor columns requires cooperation with other Hox proteins. Can regulate PITX3 promoter activity; may promote midbrain identity in embryonic stem cell-derived dopamine neurons by regulating PITX3. Negatively regulates the differentiation of T follicular helper cells T(FH)s. Involved in maintenance of hair follicle stem cell quiescence; the function probably involves regulation of FGF18. Represses transcription of various pro-apoptotic genes and cooperates with NF-kappa B-signaling in promoting B-cell expansion by inhibition of caspase-dependent apoptosis. Binds to CSF1R promoter elements and is involved in regulation of monocyte differentiation and macrophage functions; repression of CSF1R in monocytes seems to involve NCOR2 as corepressor. Involved in endothelial cell proliferation, tube formation and migration indicative for a role in angiogenesis; the role in neovascularization seems to implicate suppression of SEMA5B. Can negatively regulate androgen receptor signaling. Acts as a transcriptional activator of the FBXL7 promoter; this activity is regulated by AURKA. Its function is as follows. Involved in transcriptional regulation in embryonic stem cells (ESCs). Stimulates expression of transcription factors that are required for pluripotency and decreases expression of differentiation-associated genes. Has distinct DNA-binding specifities as compared to the canonical form and preferentially binds DNA with the sequence 5'-CGATACAA-3' (or closely related sequences). Promotes ESC self-renewal and pluripotency. This Homo sapiens (Human) protein is Forkhead box protein P1 (FOXP1).